The following is a 289-amino-acid chain: Nucleotide-binding protein CHY_0272 (289 aa).

8–15 provides a ligand contact to ATP; that stretch reads GLSGAGKT. 59-62 is a GTP binding site; it reads DVRG.

Belongs to the RapZ-like family.

Its function is as follows. Displays ATPase and GTPase activities. This Carboxydothermus hydrogenoformans (strain ATCC BAA-161 / DSM 6008 / Z-2901) protein is Nucleotide-binding protein CHY_0272.